Reading from the N-terminus, the 291-residue chain is ATP synthase gamma chain (291 aa).

This sequence belongs to the ATPase gamma chain family. F-type ATPases have 2 components, CF(1) - the catalytic core - and CF(0) - the membrane proton channel. CF(1) has five subunits: alpha(3), beta(3), gamma(1), delta(1), epsilon(1). CF(0) has three main subunits: a, b and c.

The protein resides in the cell inner membrane. Its function is as follows. Produces ATP from ADP in the presence of a proton gradient across the membrane. The gamma chain is believed to be important in regulating ATPase activity and the flow of protons through the CF(0) complex. This is ATP synthase gamma chain from Xanthobacter autotrophicus (strain ATCC BAA-1158 / Py2).